The following is a 565-amino-acid chain: MRWSRYFLYTTKEEPSETEAASHRFLTKAGFIKQVASGIYELTPIAFRVLKKIENIVRDEMDKAGAQELLLTILNPAELWKETGRWDYYGNELFKLKDRSDRDYCLGPTHEEEITDLVRKTVRSYKQLPLNLYQIHTKFRDEKRPRYGLIRGREFIMKDAYSFDTDEESAKNSYDIMVKAYKNIFKRLNLNILMVKADVGQIGGKSSHEFVAITKYGEALIAYCENCGYAANTEIVELKKPNVEKEPPLVLEEVYTPNIKTIEELSSFLNVAKSKIIKSVLYIKEDKPIMVLIRGDKKIDEKKLERLFGTDEFRLAEDDEVLRLLNTEKGFIGPFVEGKDIEIIVDNSLYNASNMVVAFNKPHYHYKNANIDFENFVDVAQVEENDPCPECGSPLKVAQGLELGHTFLLGTRYSLPMKAFFTDKDGVEKPVVMGCYGIGISRLIAALVEQYHDEKGIKWPLPVAPFQVLISCVNTSDDIQYSTSEHLYKSLTQEGIEVLFDDRDVSPGVKFNDADLIGIPYRIVVGKKAKDGLVEVVDRHTLKAVDVPIDKVLDYIKDILNVNGR.

This sequence belongs to the class-II aminoacyl-tRNA synthetase family. ProS type 1 subfamily. Homodimer.

It is found in the cytoplasm. The enzyme catalyses tRNA(Pro) + L-proline + ATP = L-prolyl-tRNA(Pro) + AMP + diphosphate. Functionally, catalyzes the attachment of proline to tRNA(Pro) in a two-step reaction: proline is first activated by ATP to form Pro-AMP and then transferred to the acceptor end of tRNA(Pro). As ProRS can inadvertently accommodate and process non-cognate amino acids such as alanine and cysteine, to avoid such errors it has two additional distinct editing activities against alanine. One activity is designated as 'pretransfer' editing and involves the tRNA(Pro)-independent hydrolysis of activated Ala-AMP. The other activity is designated 'posttransfer' editing and involves deacylation of mischarged Ala-tRNA(Pro). The misacylated Cys-tRNA(Pro) is not edited by ProRS. This is Proline--tRNA ligase from Hydrogenobaculum sp. (strain Y04AAS1).